The chain runs to 738 residues: Zinc finger protein 235 (738 aa).

In terms of domain architecture, KRAB spans 8–79 (VTFKDVAVAF…ELQTQRGKHS (72 aa)). A C2H2-type 1; degenerate zinc finger spans residues 263–285 (YQGNECEEAFNDSSSLELHKQVH). 15 C2H2-type zinc fingers span residues 319–341 (YWCHECGKGFSQSSNLQTHQRVH), 347–369 (YTCHECGKSFNQSSHLYAHLPIH), 375–397 (YRCDSCGKGFSRSTDLNIHCRVH), 403–425 (YKCEVCGKGFTQRSHLQAHERIH), 431–453 (YKCGDCGKRFSCSSNLHTHQRVH), 459–481 (YKCDECGKCFSLSFNLHSHQRVH), 487–509 (YKCEECGKGFSSASSFQSHQRVH), 515–537 (FRCNVCGKGFSQSSYFQAHQRVH), 543–565 (YKCEVCGKRFNWSLNLHNHQRVH), 571–593 (YKCEECGKGFSQASNLQAHQSVH), 599–621 (FKCDACQKRFSQASHLQAHQRVH), 627–649 (YKCDTCGKAFSQRSNLQVHQIIH), 655–677 (FKCEECGKEFSWSAGLSAHQRVH), 683–705 (YTCQQCGKGFSQASHFHTHQRVH), and 711–733 (YICDVCCKGFSQRSHLIYHQRVH).

Belongs to the krueppel C2H2-type zinc-finger protein family.

The protein resides in the nucleus. In terms of biological role, may be involved in transcriptional regulation. The protein is Zinc finger protein 235 (ZNF235) of Homo sapiens (Human).